Reading from the N-terminus, the 343-residue chain is Methionine import ATP-binding protein MetN 1 (343 aa).

Residues 2 to 241 (IKLSNITKVF…PKTPLAQKFI (240 aa)) enclose the ABC transporter domain. 38 to 45 (GASGAGKS) is an ATP binding site.

Belongs to the ABC transporter superfamily. Methionine importer (TC 3.A.1.24) family. In terms of assembly, the complex is composed of two ATP-binding proteins (MetN), two transmembrane proteins (MetI) and a solute-binding protein (MetQ).

The protein localises to the cell inner membrane. The catalysed reaction is L-methionine(out) + ATP + H2O = L-methionine(in) + ADP + phosphate + H(+). It carries out the reaction D-methionine(out) + ATP + H2O = D-methionine(in) + ADP + phosphate + H(+). Part of the ABC transporter complex MetNIQ involved in methionine import. Responsible for energy coupling to the transport system. The chain is Methionine import ATP-binding protein MetN 1 from Salmonella typhimurium (strain LT2 / SGSC1412 / ATCC 700720).